Consider the following 238-residue polypeptide: Probable transcriptional regulatory protein YcdB (238 aa).

This sequence belongs to the TACO1 family. YeeN subfamily.

The protein resides in the cytoplasm. The polypeptide is Probable transcriptional regulatory protein YcdB (ycdB) (Lactococcus lactis subsp. lactis (strain IL1403) (Streptococcus lactis)).